Consider the following 304-residue polypeptide: Glycosyltransferase AglE (304 aa).

It belongs to the glycosyltransferase 2 family.

The protein localises to the cell membrane. It functions in the pathway cell surface structure biogenesis; S-layer biogenesis. Its function is as follows. Involved in the assembly of a N-linked pentasaccharide that decorates the S-layer glycoprotein and flagellins. Catalyzes the addition to the dolichol phosphate carrier of the hexuronic acid found at position 4 of the pentasaccharide. The protein is Glycosyltransferase AglE (aglE) of Haloferax volcanii (strain ATCC 29605 / DSM 3757 / JCM 8879 / NBRC 14742 / NCIMB 2012 / VKM B-1768 / DS2) (Halobacterium volcanii).